A 165-amino-acid polypeptide reads, in one-letter code: NADPH-dependent 7-cyano-7-deazaguanine reductase (165 aa).

The tract at residues 1-24 is disordered; that stretch reads MTTRSTDQTEHLRALGQKTPYPAA. Cys-56 acts as the Thioimide intermediate in catalysis. The Proton donor role is filled by Asp-63. Substrate-binding positions include 78 to 80 and 97 to 98; these read VES and ME.

It belongs to the GTP cyclohydrolase I family. QueF type 1 subfamily.

The protein localises to the cytoplasm. It catalyses the reaction 7-aminomethyl-7-carbaguanine + 2 NADP(+) = 7-cyano-7-deazaguanine + 2 NADPH + 3 H(+). The protein operates within tRNA modification; tRNA-queuosine biosynthesis. Catalyzes the NADPH-dependent reduction of 7-cyano-7-deazaguanine (preQ0) to 7-aminomethyl-7-deazaguanine (preQ1). This chain is NADPH-dependent 7-cyano-7-deazaguanine reductase, found in Nitratidesulfovibrio vulgaris (strain ATCC 29579 / DSM 644 / CCUG 34227 / NCIMB 8303 / VKM B-1760 / Hildenborough) (Desulfovibrio vulgaris).